The following is a 502-amino-acid chain: Cyclin-dependent kinase 19 (502 aa).

Met1 carries the N-acetylmethionine modification. The Protein kinase domain maps to Glu21–Phe335. Residues Val27–Val35 and Lys52 contribute to the ATP site. Asp151 functions as the Proton acceptor in the catalytic mechanism. Residues Leu359–Tyr502 form a disordered region. Over residues Asn371–Pro392 the composition is skewed to low complexity. A compositionally biased stretch (gly residues) spans Thr408–Ala421. Positions Gln424 to Pro435 are enriched in polar residues. Ser449 is modified (phosphoserine). Polar residues predominate over residues Tyr458–Tyr467. Low complexity predominate over residues Gln468 to Ser496.

The protein belongs to the protein kinase superfamily. CMGC Ser/Thr protein kinase family. CDC2/CDKX subfamily.

The protein localises to the cytoplasm. It is found in the perinuclear region. Its subcellular location is the nucleus. It carries out the reaction L-seryl-[protein] + ATP = O-phospho-L-seryl-[protein] + ADP + H(+). The catalysed reaction is L-threonyl-[protein] + ATP = O-phospho-L-threonyl-[protein] + ADP + H(+). In Homo sapiens (Human), this protein is Cyclin-dependent kinase 19 (CDK19).